Reading from the N-terminus, the 529-residue chain is Peptide chain release factor 3 (529 aa).

Residues 11–280 (AKRRTFAIIS…GLVEWAPAPM (270 aa)) form the tr-type G domain. GTP-binding positions include 20 to 27 (SHPDAGKT), 88 to 92 (DTPGH), and 142 to 145 (NKLD).

This sequence belongs to the TRAFAC class translation factor GTPase superfamily. Classic translation factor GTPase family. PrfC subfamily.

The protein resides in the cytoplasm. Functionally, increases the formation of ribosomal termination complexes and stimulates activities of RF-1 and RF-2. It binds guanine nucleotides and has strong preference for UGA stop codons. It may interact directly with the ribosome. The stimulation of RF-1 and RF-2 is significantly reduced by GTP and GDP, but not by GMP. The chain is Peptide chain release factor 3 from Shigella sonnei (strain Ss046).